The chain runs to 112 residues: Probable insulin-like peptide beta-type 5 (112 aa).

The first 19 residues, 1-19, serve as a signal peptide directing secretion; it reads MNSVFTIIFVLCALQVAAS. A propeptide spans 20–58 (removed; by convertase egl-3); sequence FRQSFGPSMSEESASMQLLRELQHNMMESAHRPMPRARR. Disulfide bonds link cysteine 68/cysteine 97, cysteine 80/cysteine 110, cysteine 84/cysteine 111, and cysteine 96/cysteine 101.

This sequence belongs to the insulin family. May be processed by serine endoprotease bli-4. Expressed by ASI and ASJ sensory neurons.

The protein resides in the secreted. In terms of biological role, probable insulin-like peptide which negatively regulates synapse development at the neuromuscular junctions. Probably acts as a daf-2/InsR agonist ligand to prevent dauer formation under optimal environmental conditions. Acts on AWC sensory neurons to regulate high salt chemotaxis responses. The sequence is that of Probable insulin-like peptide beta-type 5 (ins-6) from Caenorhabditis elegans.